We begin with the raw amino-acid sequence, 526 residues long: Probable feruloyl esterase B-2 (526 aa).

A signal peptide spans 1–18; it reads MTKLSLLPLLALASAVLA. 2 disulfides stabilise this stretch: Cys-27/Cys-74 and Cys-62/Cys-113. Asn-52, Asn-97, and Asn-137 each carry an N-linked (GlcNAc...) asparagine glycan. 4 disulfide bridges follow: Cys-186–Cys-441, Cys-255–Cys-272, Cys-281–Cys-291, and Cys-503–Cys-525. Ser-187 serves as the catalytic Acyl-ester intermediate. Asn-233 carries N-linked (GlcNAc...) asparagine glycosylation. 5 residues coordinate Ca(2+): Asp-256, Asp-259, Ala-261, Asp-263, and Ile-265. The N-linked (GlcNAc...) asparagine glycan is linked to Asn-311. Catalysis depends on charge relay system residues Asp-400 and His-440. N-linked (GlcNAc...) asparagine glycosylation is present at Asn-516.

The protein belongs to the tannase family.

It is found in the secreted. It carries out the reaction feruloyl-polysaccharide + H2O = ferulate + polysaccharide.. Involved in degradation of plant cell walls. Hydrolyzes the feruloyl-arabinose ester bond in arabinoxylans as well as the feruloyl-galactose and feruloyl-arabinose ester bonds in pectin. The sequence is that of Probable feruloyl esterase B-2 (faeB-2) from Neosartorya fischeri (strain ATCC 1020 / DSM 3700 / CBS 544.65 / FGSC A1164 / JCM 1740 / NRRL 181 / WB 181) (Aspergillus fischerianus).